A 267-amino-acid polypeptide reads, in one-letter code: Protein HesA, heterocyst (267 aa).

This sequence belongs to the HesA/MoeB/ThiF family.

The protein is Protein HesA, heterocyst (hesA1) of Trichormus variabilis (strain ATCC 29413 / PCC 7937) (Anabaena variabilis).